Consider the following 511-residue polypeptide: Pancreatic alpha-amylase (511 aa).

Positions 1–15 (MKFFLLLFTIGFCWA) are cleaved as a signal peptide. Glutamine 16 carries the post-translational modification Pyrrolidone carboxylic acid. Cystine bridges form between cysteine 43–cysteine 101, cysteine 85–cysteine 130, and cysteine 156–cysteine 175. Positions 115, 173, and 182 each coordinate Ca(2+). Arginine 210 provides a ligand contact to chloride. Aspartate 212 acts as the Nucleophile in catalysis. Histidine 216 serves as a coordination point for Ca(2+). Glutamate 248 (proton donor) is an active-site residue. 2 residues coordinate chloride: asparagine 313 and arginine 352. Intrachain disulfides connect cysteine 393/cysteine 399 and cysteine 465/cysteine 477. Asparagine 476 carries N-linked (GlcNAc...) asparagine glycosylation.

This sequence belongs to the glycosyl hydrolase 13 family. In terms of assembly, monomer. Binds to the sea anemone inhibitor helianthamide. Ca(2+) serves as cofactor. It depends on chloride as a cofactor. As to expression, detected in pancreas (at protein level).

Its subcellular location is the secreted. The protein resides in the extracellular space. The catalysed reaction is Endohydrolysis of (1-&gt;4)-alpha-D-glucosidic linkages in polysaccharides containing three or more (1-&gt;4)-alpha-linked D-glucose units.. This Homo sapiens (Human) protein is Pancreatic alpha-amylase (AMY2A).